The primary structure comprises 284 residues: L-fucose dehydrogenase (284 aa).

Residues Arg19, Ile21, Asp40, Lys41, Asp62, Val63, Asn89, Tyr154, Lys158, Ile187, Thr189, and Leu191 each contribute to the NAD(+) site.

Belongs to the short-chain dehydrogenases/reductases (SDR) family.

The enzyme catalyses L-fucose + NAD(+) = L-fucono-1,5-lactone + NADH + H(+). It catalyses the reaction D-arabinose + NAD(+) = D-arabinono-1,5-lactone + NADH + H(+). The catalysed reaction is L-galactose + NAD(+) = L-galactono-1,5-lactone + NADH + H(+). The protein operates within carbohydrate degradation; L-fucose degradation. Its function is as follows. Catalyzes the NAD(+)-dependent oxidation of L-fucose, yielding L-fucono-1,5-lactone, which rapidly converts spontaneously to L-fucone-1,4-lactone. Can also act on D-arabinose and L-galactose, with lower catalytic efficiency. Does not use NADPH. May be the initial enzyme of the putative L-fucose degradation pathway in mammals. The chain is L-fucose dehydrogenase (HSD17B14) from Oryctolagus cuniculus (Rabbit).